A 201-amino-acid chain; its full sequence is ATP-dependent Clp protease proteolytic subunit (201 aa).

Ser97 functions as the Nucleophile in the catalytic mechanism. His122 is an active-site residue.

The protein belongs to the peptidase S14 family. As to quaternary structure, fourteen ClpP subunits assemble into 2 heptameric rings which stack back to back to give a disk-like structure with a central cavity, resembling the structure of eukaryotic proteasomes.

The protein localises to the cytoplasm. The catalysed reaction is Hydrolysis of proteins to small peptides in the presence of ATP and magnesium. alpha-casein is the usual test substrate. In the absence of ATP, only oligopeptides shorter than five residues are hydrolyzed (such as succinyl-Leu-Tyr-|-NHMec, and Leu-Tyr-Leu-|-Tyr-Trp, in which cleavage of the -Tyr-|-Leu- and -Tyr-|-Trp bonds also occurs).. In terms of biological role, cleaves peptides in various proteins in a process that requires ATP hydrolysis. Has a chymotrypsin-like activity. Plays a major role in the degradation of misfolded proteins. This chain is ATP-dependent Clp protease proteolytic subunit, found in Nitratidesulfovibrio vulgaris (strain ATCC 29579 / DSM 644 / CCUG 34227 / NCIMB 8303 / VKM B-1760 / Hildenborough) (Desulfovibrio vulgaris).